Here is a 228-residue protein sequence, read N- to C-terminus: Uracil-DNA glycosylase (228 aa).

The active-site Proton acceptor is the Asp71.

The protein belongs to the uracil-DNA glycosylase (UDG) superfamily. UNG family.

It is found in the cytoplasm. The catalysed reaction is Hydrolyzes single-stranded DNA or mismatched double-stranded DNA and polynucleotides, releasing free uracil.. Functionally, excises uracil residues from the DNA which can arise as a result of misincorporation of dUMP residues by DNA polymerase or due to deamination of cytosine. In Thermobifida fusca (strain YX), this protein is Uracil-DNA glycosylase.